The sequence spans 114 residues: U10-agatoxin-Ao1a (114 aa).

The first 15 residues, 1-15 (MCVATCLCTFAYVLA), serve as a signal peptide directing secretion. The propeptide occupies 16-32 (KSDEGENLISKVEETQR). 5 disulfide bridges follow: Cys-34-Cys-53, Cys-41-Cys-59, Cys-50-Cys-86, Cys-52-Cys-76, and Cys-61-Cys-74. Residues 95–114 (GSQNPSLCKDPNPRRRRHGK) are disordered.

Belongs to the neurotoxin 04 (omega-agtx) family. 03 (type II/III omega-agtx) subfamily. Expressed by the venom gland.

The protein resides in the secreted. Functionally, inhibits voltage-gated calcium channels (Cav). This chain is U10-agatoxin-Ao1a, found in Agelena orientalis (Funnel-web spider).